The primary structure comprises 319 residues: L-lactate dehydrogenase 2 (319 aa).

Residues Val16, Asp37, Lys42, Tyr68, and 82–83 (GA) each bind NAD(+). Residues Gln85 and Arg91 each coordinate substrate. NAD(+) contacts are provided by residues Ser104, 121–123 (AAN), and Ser146. Position 123-126 (123-126 (NPVD)) interacts with substrate. 151–154 (DSAR) serves as a coordination point for substrate. His178 (proton acceptor) is an active-site residue. Tyr222 is subject to Phosphotyrosine. Position 231 (Thr231) interacts with substrate.

Belongs to the LDH/MDH superfamily. LDH family. In terms of assembly, homotetramer.

It is found in the cytoplasm. The enzyme catalyses (S)-lactate + NAD(+) = pyruvate + NADH + H(+). It functions in the pathway fermentation; pyruvate fermentation to lactate; (S)-lactate from pyruvate: step 1/1. Catalyzes the conversion of lactate to pyruvate (Potential). Contributes to S.aureus growth during nitrosative stress in both aerobically and anaerobically cultured cells, despite playing a secondary role in this resistance mechanism. The sequence is that of L-lactate dehydrogenase 2 from Staphylococcus aureus (strain USA300).